We begin with the raw amino-acid sequence, 252 residues long: Demethylmenaquinone methyltransferase (252 aa).

S-adenosyl-L-methionine contacts are provided by residues Thr-64, Asp-85, and 112 to 113 (NA).

This sequence belongs to the class I-like SAM-binding methyltransferase superfamily. MenG/UbiE family.

It catalyses the reaction a 2-demethylmenaquinol + S-adenosyl-L-methionine = a menaquinol + S-adenosyl-L-homocysteine + H(+). The protein operates within quinol/quinone metabolism; menaquinone biosynthesis; menaquinol from 1,4-dihydroxy-2-naphthoate: step 2/2. Its function is as follows. Methyltransferase required for the conversion of demethylmenaquinol (DMKH2) to menaquinol (MKH2). The protein is Demethylmenaquinone methyltransferase of Lactococcus lactis subsp. lactis (strain IL1403) (Streptococcus lactis).